Consider the following 362-residue polypeptide: 3-isopropylmalate dehydrogenase (362 aa).

Residue 78-91 (GPKWESLPPDEQPE) participates in NAD(+) binding. The substrate site is built by Arg-99, Arg-109, Arg-138, and Asp-227. Mg(2+) is bound by residues Asp-227, Asp-251, and Asp-255. 285–297 (GSAPDIAGQGIAN) lines the NAD(+) pocket.

Belongs to the isocitrate and isopropylmalate dehydrogenases family. LeuB type 1 subfamily. Homodimer. It depends on Mg(2+) as a cofactor. Mn(2+) is required as a cofactor.

It is found in the cytoplasm. The catalysed reaction is (2R,3S)-3-isopropylmalate + NAD(+) = 4-methyl-2-oxopentanoate + CO2 + NADH. Its pathway is amino-acid biosynthesis; L-leucine biosynthesis; L-leucine from 3-methyl-2-oxobutanoate: step 3/4. Its function is as follows. Catalyzes the oxidation of 3-carboxy-2-hydroxy-4-methylpentanoate (3-isopropylmalate) to 3-carboxy-4-methyl-2-oxopentanoate. The product decarboxylates to 4-methyl-2 oxopentanoate. The chain is 3-isopropylmalate dehydrogenase from Geobacter sulfurreducens (strain ATCC 51573 / DSM 12127 / PCA).